Reading from the N-terminus, the 222-residue chain is uncharacterized protein (222 aa).

The segment at residues 1–27 (MSFTRRKFVLGMGTVIFFTGSASSLLA) is a signal peptide (tat-type signal). 3 4Fe-4S ferredoxin-type domains span residues 37–66 (YAMI…PAQG), 83–114 (TQYH…RDEQ), and 115–144 (GIVR…LNPV). Residues Cys46, Cys49, Cys52, Cys56, Cys92, Cys95, Cys100, Cys104, Cys124, Cys127, Cys130, Cys134, Cys151, Cys154, Cys167, and Cys171 each coordinate [4Fe-4S] cluster.

Post-translationally, predicted to be exported by the Tat system. The position of the signal peptide cleavage has not been experimentally proven.

This is an uncharacterized protein from Escherichia coli O157:H7.